The following is a 71-amino-acid chain: Small ribosomal subunit protein eS17 (71 aa).

Belongs to the eukaryotic ribosomal protein eS17 family.

The protein is Small ribosomal subunit protein eS17 of Pyrobaculum arsenaticum (strain DSM 13514 / JCM 11321 / PZ6).